Reading from the N-terminus, the 239-residue chain is Non-classical arabinogalactan protein 30 (239 aa).

The first 24 residues, 1–24 (MGIIGKSVSLTLFALLCFTSSVFT), serve as a signal peptide directing secretion. An N-linked (GlcNAc...) asparagine glycan is attached at N106.

This sequence belongs to the non-classical AGP family. Specifically expressed in root tips.

The protein resides in the secreted. It is found in the cell wall. In terms of biological role, proteoglycan required for the timing of seed germination. May function in the abscisic acid (ABA) response. In Arabidopsis thaliana (Mouse-ear cress), this protein is Non-classical arabinogalactan protein 30.